The chain runs to 196 residues: DnaA initiator-associating protein DiaA (196 aa).

One can recognise an SIS domain in the interval 34 to 196 (MVQSLLNGNK…DNTLFPHQDD (163 aa)).

The protein belongs to the SIS family. DiaA subfamily. As to quaternary structure, homotetramer; dimer of dimers.

Functionally, required for the timely initiation of chromosomal replication via direct interactions with the DnaA initiator protein. This Photorhabdus laumondii subsp. laumondii (strain DSM 15139 / CIP 105565 / TT01) (Photorhabdus luminescens subsp. laumondii) protein is DnaA initiator-associating protein DiaA.